Consider the following 591-residue polypeptide: Asparagine synthetase [glutamine-hydrolyzing] 2 (591 aa).

Cys2 acts as the For GATase activity in catalysis. In terms of domain architecture, Glutamine amidotransferase type-2 spans 2 to 185; sequence CGILAVLGVA…PGHLYSSKTG (184 aa). L-glutamine is bound by residues 50-54, 75-77, and Asp98; these read RLAIV and NGE. Residues 193 to 516 enclose the Asparagine synthetase domain; the sequence is PPWFSESIPS…PKNAARLTVP (324 aa). ATP-binding positions include Leu231, Ile267, and 341-342; that span reads SG.

Expressed in companion cells of leaf sheath vascular bundles, and phloem-parenchyma cells, nucellar projections and nucellar epidermis of dorsal vascular bundles of grains.

It catalyses the reaction L-aspartate + L-glutamine + ATP + H2O = L-asparagine + L-glutamate + AMP + diphosphate + H(+). The protein operates within amino-acid biosynthesis; L-asparagine biosynthesis; L-asparagine from L-aspartate (L-Gln route): step 1/1. Functionally, essential for nitrogen assimilation, distribution and remobilization within the plant via the phloem. The polypeptide is Asparagine synthetase [glutamine-hydrolyzing] 2 (Oryza sativa subsp. japonica (Rice)).